A 224-amino-acid chain; its full sequence is GrpE protein homolog 2, mitochondrial (224 aa).

A mitochondrion-targeting transit peptide spans 1 to 31 (MAARLLWAVRRRMQPLAAHAASEGRGWLHPF). K141 carries the post-translational modification N6-acetyllysine.

It belongs to the GrpE family. As to quaternary structure, probable component of the PAM complex at least composed of a mitochondrial HSP70 protein, GRPEL1 or GRPEL2, TIMM44, TIMM16/PAM16 and TIMM14/DNAJC19.

It localises to the mitochondrion matrix. Functionally, essential component of the PAM complex, a complex required for the translocation of transit peptide-containing proteins from the inner membrane into the mitochondrial matrix in an ATP-dependent manner. Seems to control the nucleotide-dependent binding of mitochondrial HSP70 to substrate proteins. Stimulates ATPase activity of mt-HSP70. May also serve to modulate the interconversion of oligomeric (inactive) and monomeric (active) forms of mt-HSP70. This Bos taurus (Bovine) protein is GrpE protein homolog 2, mitochondrial (GRPEL2).